A 584-amino-acid chain; its full sequence is Chaperonin GroEL 1 (584 aa).

ATP contacts are provided by residues 29-32 (TIGP), 86-90 (DGTTT), Gly413, and Asp492. A disordered region spans residues 523–542 (EPEAAAPGGPGGDPMGGMGG). Residues 530 to 542 (GGPGGDPMGGMGG) show a composition bias toward gly residues.

Belongs to the chaperonin (HSP60) family. As to quaternary structure, forms a cylinder of 14 subunits composed of two heptameric rings stacked back-to-back. Interacts with the co-chaperonin GroES.

The protein localises to the cytoplasm. It carries out the reaction ATP + H2O + a folded polypeptide = ADP + phosphate + an unfolded polypeptide.. Its function is as follows. Together with its co-chaperonin GroES, plays an essential role in assisting protein folding. The GroEL-GroES system forms a nano-cage that allows encapsulation of the non-native substrate proteins and provides a physical environment optimized to promote and accelerate protein folding. The polypeptide is Chaperonin GroEL 1 (Prochlorococcus marinus (strain MIT 9312)).